The chain runs to 197 residues: Nascent polypeptide-associated complex subunit alpha (197 aa).

Acidic residues predominate over residues Met-1 to Val-20. Disordered stretches follow at residues Met-1–Leu-46 and Gly-120–Asp-154. In terms of domain architecture, NAC-A/B spans Asp-36–Ser-101. Basic and acidic residues predominate over residues Ser-134 to Asp-154. The region spanning Val-158–Leu-195 is the UBA domain.

Belongs to the NAC-alpha family.

Functionally, may promote appropriate targeting of ribosome-nascent polypeptide complexes. This chain is Nascent polypeptide-associated complex subunit alpha, found in Babesia divergens.